Reading from the N-terminus, the 621-residue chain is Autonomous transposable element EN-1 mosaic protein (621 aa).

Disordered regions lie at residues 1 to 119 (MFRM…PPRR), 428 to 447 (YTRR…PSAR), 498 to 530 (QQPP…TSVQ), and 549 to 621 (RQPG…PPTE). 2 stretches are compositionally biased toward polar residues: residues 27–39 (EGTT…QEQL) and 47–61 (RGSS…TTSR). The span at 82-102 (AAVDAEAEEAAAELDDGEETS) shows a compositional bias: acidic residues. The span at 570–594 (PPRGQSQSPGLPSHSPGSGSGSHHA) shows a compositional bias: low complexity.

In terms of biological role, this protein has most probably three functions; the mutator (M) function, for excision and transposition; the suppressor (S) function, which inhibits residual gene activity of certain alleles in which inhibitor elements are integrated; an activator (A) function is proposed, because inactive SPM can be activated by a second SPM. The sequence is that of Autonomous transposable element EN-1 mosaic protein from Zea mays (Maize).